A 501-amino-acid polypeptide reads, in one-letter code: Aminoaldehyde dehydrogenase ALDH10A8, chloroplastic (501 aa).

Na(+) contacts are provided by aspartate 99 and leucine 189. Residues 238–243 (GSFATG) and 238–245 (GSFATGSK) each bind NAD(+). The Proton acceptor role is filled by glutamate 260. 2 residues coordinate NAD(+): cysteine 294 and glutamate 393. Cysteine 294 (nucleophile) is an active-site residue.

It belongs to the aldehyde dehydrogenase family. Homodimer. In terms of tissue distribution, widely expressed.

The protein resides in the cytoplasm. It is found in the plastid. The protein localises to the chloroplast. The enzyme catalyses 4-aminobutanal + NAD(+) + H2O = 4-aminobutanoate + NADH + 2 H(+). The catalysed reaction is 3-aminopropanal + NAD(+) + H2O = beta-alanine + NADH + 2 H(+). It catalyses the reaction 4-(trimethylamino)butanal + NAD(+) + H2O = 4-(trimethylamino)butanoate + NADH + 2 H(+). It carries out the reaction 4-guanidinobutanal + NAD(+) + H2O = 4-guanidinobutanoate + NADH + 2 H(+). The enzyme catalyses betaine aldehyde + NAD(+) + H2O = glycine betaine + NADH + 2 H(+). It functions in the pathway amine and polyamine biosynthesis; betaine biosynthesis via choline pathway; betaine from betaine aldehyde: step 1/1. In terms of biological role, dehydrogenase that catalyzes the oxidation of several aminoaldehydes. Metabolizes and detoxifies aldehyde products of polyamine degradation to non-toxic amino acids. Catalyzes the oxidation of 4-aminobutanal and 3-aminopropanal to 4-aminobutanoate and beta-alanine, respectively. Production of 4-aminobutinoate by ALDH10A8 may confer tolerance to salt stress. Catalyzes the oxidation of 4-(trimethylamino)butanal and 4-guanidinobutanal to 4-trimethylammoniobutanoate and 4-guanidinobutanoate, respectively. Involved in glycine betaine biosynthesis. Catalyzes with low efficiency the oxidation of betaine aldehyde to glycine betaine. In Arabidopsis thaliana (Mouse-ear cress), this protein is Aminoaldehyde dehydrogenase ALDH10A8, chloroplastic.